Reading from the N-terminus, the 57-residue chain is UPF0391 membrane protein RPA3029 (57 aa).

Transmembrane regions (helical) follow at residues 6–26 (WALI…TGIS) and 35–55 (ILFY…FTIF).

It belongs to the UPF0391 family.

The protein resides in the cell membrane. The chain is UPF0391 membrane protein RPA3029 from Rhodopseudomonas palustris (strain ATCC BAA-98 / CGA009).